Consider the following 73-residue polypeptide: Conotoxin Lt9a (73 aa).

Residues 1–23 form the signal peptide; the sequence is MTLTKSAVLILVLLLAFDNFADV. Residues 24 to 40 constitute a propeptide that is removed on maturation; it reads QPGLITMGGGRLSNLLS. Intrachain disulfides connect Cys48–Cys62, Cys53–Cys64, and Cys59–Cys69.

This sequence belongs to the conotoxin P superfamily. Expressed by the venom duct.

The protein resides in the secreted. Functionally, probable neurotoxin that inhibits ion channels. The polypeptide is Conotoxin Lt9a (Conus litteratus (Lettered cone)).